The chain runs to 219 residues: Proteasome subunit beta 2 (219 aa).

Residues 1-25 (MAEWIAGGLEGPAGRGLDERVVRSG) constitute a propeptide, removed in mature form; by autocatalysis. Catalysis depends on T26, which acts as the Nucleophile.

Belongs to the peptidase T1B family. As to quaternary structure, the 20S proteasome core is composed of 14 alpha and 14 beta subunits that assemble into four stacked heptameric rings, resulting in a barrel-shaped structure. The two inner rings, each composed of seven catalytic beta subunits, are sandwiched by two outer rings, each composed of seven alpha subunits. The catalytic chamber with the active sites is on the inside of the barrel. Has a gated structure, the ends of the cylinder being occluded by the N-termini of the alpha-subunits. Is capped at one or both ends by the proteasome regulatory ATPase, PAN.

Its subcellular location is the cytoplasm. It carries out the reaction Cleavage of peptide bonds with very broad specificity.. The formation of the proteasomal ATPase PAN-20S proteasome complex, via the docking of the C-termini of PAN into the intersubunit pockets in the alpha-rings, triggers opening of the gate for substrate entry. Interconversion between the open-gate and close-gate conformations leads to a dynamic regulation of the 20S proteasome proteolysis activity. Its function is as follows. Component of the proteasome core, a large protease complex with broad specificity involved in protein degradation. The chain is Proteasome subunit beta 2 from Aeropyrum pernix (strain ATCC 700893 / DSM 11879 / JCM 9820 / NBRC 100138 / K1).